A 420-amino-acid chain; its full sequence is Diaminobutyrate--2-oxoglutarate transaminase (420 aa).

Lys-271 is modified (N6-(pyridoxal phosphate)lysine).

This sequence belongs to the class-III pyridoxal-phosphate-dependent aminotransferase family. The cofactor is pyridoxal 5'-phosphate.

The enzyme catalyses L-2,4-diaminobutanoate + 2-oxoglutarate = L-aspartate 4-semialdehyde + L-glutamate. Its pathway is amine and polyamine biosynthesis; ectoine biosynthesis; L-ectoine from L-aspartate 4-semialdehyde: step 1/3. Catalyzes reversively the conversion of L-aspartate beta-semialdehyde (ASA) to L-2,4-diaminobutyrate (DABA) by transamination with L-glutamate. The chain is Diaminobutyrate--2-oxoglutarate transaminase (ectB) from Streptomyces anulatus (Streptomyces chrysomallus).